A 162-amino-acid polypeptide reads, in one-letter code: Peptide deformylase-like (162 aa).

This sequence belongs to the polypeptide deformylase family.

The sequence is that of Peptide deformylase-like from Staphylococcus aureus (strain COL).